The primary structure comprises 84 residues: Beta-cardiotoxin CTX14 (84 aa).

The signal sequence occupies residues 1 to 21 (MKTLLLTLVVVTIVCLDLGYT). 4 cysteine pairs are disulfide-bonded: Cys-24–Cys-43, Cys-36–Cys-61, Cys-65–Cys-76, and Cys-77–Cys-82.

This sequence belongs to the three-finger toxin family. Short-chain subfamily. Aminergic toxin sub-subfamily. In terms of tissue distribution, expressed by the venom gland.

It is found in the secreted. Acts as a beta-blocker by binding to beta-1 and beta-2 adrenergic receptors (ADRB1 and ADRB2). It dose-dependently decreases the heart rate (bradycardia), whereas conventional cardiotoxins increases it. At 100 mg/kg, intraperitoneal injection into mice provokes labored breathing, impaired locomotion, lack of response to external stimuli, and death (after 30 minutes). The chain is Beta-cardiotoxin CTX14 from Ophiophagus hannah (King cobra).